The following is a 320-amino-acid chain: Acetyl-coenzyme A carboxylase carboxyl transferase subunit alpha (320 aa).

Residues 42 to 295 enclose the CoA carboxyltransferase C-terminal domain; that stretch reads IEDKAKAALH…GDAIAQAFSD (254 aa).

Belongs to the AccA family. As to quaternary structure, acetyl-CoA carboxylase is a heterohexamer composed of biotin carboxyl carrier protein (AccB), biotin carboxylase (AccC) and two subunits each of ACCase subunit alpha (AccA) and ACCase subunit beta (AccD).

The protein resides in the cytoplasm. It catalyses the reaction N(6)-carboxybiotinyl-L-lysyl-[protein] + acetyl-CoA = N(6)-biotinyl-L-lysyl-[protein] + malonyl-CoA. The protein operates within lipid metabolism; malonyl-CoA biosynthesis; malonyl-CoA from acetyl-CoA: step 1/1. Component of the acetyl coenzyme A carboxylase (ACC) complex. First, biotin carboxylase catalyzes the carboxylation of biotin on its carrier protein (BCCP) and then the CO(2) group is transferred by the carboxyltransferase to acetyl-CoA to form malonyl-CoA. The protein is Acetyl-coenzyme A carboxylase carboxyl transferase subunit alpha of Afipia carboxidovorans (strain ATCC 49405 / DSM 1227 / KCTC 32145 / OM5) (Oligotropha carboxidovorans).